The primary structure comprises 374 residues: MPLLDTPFAQLDLIRQPEQQNEPLQAFDAADEYLLNHLAEQNLPIETRVLVLNDSFGALAISLSGNVQVSTSGDSFLAFQGLEKNLLRNGQAFDALRGIPASEPLVGPFDRVLIRVPKTLALLEEQLIRLQGQLAPGAQVVAAAMVKHLPRAAGDLLERYIGPVQASLAVKKARLLIATPEAKAPAVSPYPTRYRLDEPAIELLNHANVFCREGLDIGTRAFLPHLPKNLGAAGVADLGCGNGVLAIASALQNPDAHYTLVDESFMAVQSAAENWRAALGEREAIVRAGDGLAGQEAQSLDVVLCNPPFHQQQVVGDFLAWRMFQQAREALVVGGALYIVGNRHLGYHSKLARLFRGVEQVAATPKFVILKARK.

Belongs to the methyltransferase superfamily. RlmG family.

It localises to the cytoplasm. The catalysed reaction is guanosine(1835) in 23S rRNA + S-adenosyl-L-methionine = N(2)-methylguanosine(1835) in 23S rRNA + S-adenosyl-L-homocysteine + H(+). In terms of biological role, specifically methylates the guanine in position 1835 (m2G1835) of 23S rRNA. The protein is Ribosomal RNA large subunit methyltransferase G of Pseudomonas fluorescens (strain Pf0-1).